A 570-amino-acid polypeptide reads, in one-letter code: Apyrase (570 aa).

Positions 1 to 23 are cleaved as a signal peptide; it reads MALVRFATIITVLCHLAIQDGAA. Residues Asp43, His45, and Asp94 each coordinate a divalent metal cation. A glycan (N-linked (GlcNAc...) asparagine) is linked at Asn108. A divalent metal cation is bound by residues Asn126, His229, and His253. N-linked (GlcNAc...) asparagine glycosylation is found at Asn287 and Asn326. Arg367 contacts AMP. A glycan (N-linked (GlcNAc...) asparagine) is linked at Asn387. Positions 402 and 507 each coordinate AMP. N-linked (GlcNAc...) asparagine glycans are attached at residues Asn552 and Asn555.

The protein belongs to the 5'-nucleotidase family. Interacts with human PLAT; the interaction results in PLAT activation probably via an allosteric activation mechanism. Requires a divalent metal cation as cofactor. As to expression, saliva (at protein level). Salivary gland (at protein level). Not detected in midgut.

Its subcellular location is the secreted. It carries out the reaction a ribonucleoside 5'-triphosphate + 2 H2O = a ribonucleoside 5'-phosphate + 2 phosphate + 2 H(+). Functionally, cleaves adenosine triphosphate (ATP) and adenosine diphosphate (ADP) to adenosine monophosphate (AMP) and inorganic phosphate. Enhances fibrin degradation in the midgut blood bolus. Activates human tissue plasminogen activator (PLAT), probably via an allosteric activation mechanism. Inhibits ADP-mediated host platelet aggregation in vitro and in mosquito midgut. Inhibits host neutrophil activation in the mosquito midgut: reduces neutrophil extracellular traps formation in the presence of platelets and the formation of total cell- and mitochondrial-derived reactive oxygen species. (Microbial infection) Promotes Plasmodium berghei parasite transmission from the mammalian host to the mosquito probably by reducing the blood bolus viscosity. Facilitates sporozoite transmission from the mosquito to the mammalian host during blood feeding. The sequence is that of Apyrase from Anopheles gambiae (African malaria mosquito).